Reading from the N-terminus, the 165-residue chain is uncharacterized protein (165 aa).

A helical transmembrane segment spans residues 7-29 (YPLIFTAFLLIAFCLIFFSYHLI).

Its subcellular location is the membrane. This is an uncharacterized protein from Bacillus subtilis (strain 168).